Consider the following 503-residue polypeptide: Probable DNA ligase (503 aa).

Asp212 is a binding site for ATP. Residue Lys214 is the N6-AMP-lysine intermediate of the active site. Residues Arg219, Arg234, Glu263, Phe296, Arg368, and Lys374 each contribute to the ATP site.

Belongs to the ATP-dependent DNA ligase family. The cofactor is Mg(2+).

The catalysed reaction is ATP + (deoxyribonucleotide)n-3'-hydroxyl + 5'-phospho-(deoxyribonucleotide)m = (deoxyribonucleotide)n+m + AMP + diphosphate.. Functionally, DNA ligase that seals nicks in double-stranded DNA during DNA replication, DNA recombination and DNA repair. The protein is Probable DNA ligase of Kineococcus radiotolerans (strain ATCC BAA-149 / DSM 14245 / SRS30216).